The chain runs to 267 residues: Neuferricin (267 aa).

The first 17 residues, 1–17 (MLKYLVALISMVLAVWT), serve as a signal peptide directing secretion. One can recognise a Cytochrome b5 heme-binding domain in the interval 53–150 (LLTKEQLSLY…RDYTPVGKLI (98 aa)).

The protein belongs to the cytochrome b5 family. MAPR subfamily.

It is found in the secreted. In terms of biological role, heme-binding protein which promotes neuronal but not astrocyte differentiation. The sequence is that of Neuferricin (cyb5d2) from Danio rerio (Zebrafish).